A 430-amino-acid polypeptide reads, in one-letter code: Tol-Pal system protein TolB (430 aa).

A signal peptide spans 1-21; sequence MKQALRVAFGFLMLWAAVLHA.

This sequence belongs to the TolB family. The Tol-Pal system is composed of five core proteins: the inner membrane proteins TolA, TolQ and TolR, the periplasmic protein TolB and the outer membrane protein Pal. They form a network linking the inner and outer membranes and the peptidoglycan layer.

The protein localises to the periplasm. In terms of biological role, part of the Tol-Pal system, which plays a role in outer membrane invagination during cell division and is important for maintaining outer membrane integrity. TolB occupies a key intermediary position in the Tol-Pal system because it communicates directly with both membrane-embedded components, Pal in the outer membrane and TolA in the inner membrane. The sequence is that of Tol-Pal system protein TolB from Salmonella choleraesuis (strain SC-B67).